A 273-amino-acid chain; its full sequence is Large ribosomal subunit protein uL2 (273 aa).

Residues 228–273 (VDHPHGGGEGKTSGGRHPVTPWGFPTKGKKTRKNKRTSKFIVKKRK) are disordered. Over residues 254–273 (KGKKTRKNKRTSKFIVKKRK) the composition is skewed to basic residues.

The protein belongs to the universal ribosomal protein uL2 family. Part of the 50S ribosomal subunit. Forms a bridge to the 30S subunit in the 70S ribosome.

In terms of biological role, one of the primary rRNA binding proteins. Required for association of the 30S and 50S subunits to form the 70S ribosome, for tRNA binding and peptide bond formation. It has been suggested to have peptidyltransferase activity; this is somewhat controversial. Makes several contacts with the 16S rRNA in the 70S ribosome. The sequence is that of Large ribosomal subunit protein uL2 from Rickettsia felis (strain ATCC VR-1525 / URRWXCal2) (Rickettsia azadi).